Here is a 198-residue protein sequence, read N- to C-terminus: Dynactin subunit 5 (198 aa).

Positions 179–188 (NTPASKGLPS) are enriched in polar residues. Positions 179-198 (NTPASKGLPSTPTKLQTTTT) are disordered. Residues 189 to 198 (TPTKLQTTTT) show a composition bias toward low complexity.

It belongs to the dynactin subunits 5/6 family. Dynactin subunit 5 subfamily. Member of the pointed-end complex of the dynactin shoulder complex.

The protein resides in the cytoplasm. It localises to the cytoskeleton. This is Dynactin subunit 5 (dynE) from Dictyostelium discoideum (Social amoeba).